Consider the following 485-residue polypeptide: Probable carboxypeptidase S-like 1 (485 aa).

An N-terminal signal peptide occupies residues 1-21 (MIFKFFFIFFLIILVIKISES). His111 is a binding site for Zn(2+). The active site involves Asp113. Residue Asp142 coordinates Zn(2+). Catalysis depends on Glu177, which acts as the Proton acceptor. Zn(2+) contacts are provided by Glu178, Asp204, and His431.

The protein belongs to the peptidase M20A family. Requires Zn(2+) as cofactor.

It is found in the secreted. In Dictyostelium discoideum (Social amoeba), this protein is Probable carboxypeptidase S-like 1.